The following is a 301-amino-acid chain: Oxaloacetate tautomerase YisK (301 aa).

An oxalate-binding site is contributed by lysine 99. Mn(2+) contacts are provided by glutamate 148, glutamate 150, and aspartate 179. 2 residues coordinate oxalate: lysine 196 and threonine 266.

This sequence belongs to the FAH family. Homodimer. It depends on Mg(2+) as a cofactor. Requires Mn(2+) as cofactor.

The protein localises to the cytoplasm. The catalysed reaction is oxaloacetate = enol-oxaloacetate. It catalyses the reaction oxaloacetate + H(+) = pyruvate + CO2. Tautomerase that converts enol-oxaloacetate to the keto form of oxaloacetate. Also shows weak oxaloacetate decarboxylase (ODx), catalyzing the decarboxylation of oxaloacetate (OAA) to pyruvate and CO(2). The chain is Oxaloacetate tautomerase YisK from Bacillus subtilis (strain 168).